Consider the following 411-residue polypeptide: Arginine deiminase (411 aa).

Cys401 functions as the Amidino-cysteine intermediate in the catalytic mechanism.

This sequence belongs to the arginine deiminase family. In terms of processing, glycosylated.

It localises to the cytoplasm. It carries out the reaction L-arginine + H2O = L-citrulline + NH4(+). It functions in the pathway amino-acid degradation; L-arginine degradation via ADI pathway; carbamoyl phosphate from L-arginine: step 1/2. This chain is Arginine deiminase (arcA), found in Streptococcus pyogenes serotype M1.